Reading from the N-terminus, the 193-residue chain is Phosphatidylglycerophosphatase and protein-tyrosine phosphatase 1 (193 aa).

The transit peptide at 1 to 31 (MAASAWLEAGLARVLFYPTLLYTVFRGRVRG) directs the protein to the mitochondrion. Residues 37–188 (WYHRIDHTVL…LKEFHKEITA (152 aa)) enclose the Tyrosine-protein phosphatase domain. The residue at position 85 (Lys85) is an N6-succinyllysine. The Phosphocysteine intermediate role is filled by Cys132.

Belongs to the protein-tyrosine phosphatase family. Non-receptor class dual specificity subfamily. Interacts with STYXL1; the interaction inhibits PTPMT1 catalytic activity. As to expression, predominantly expressed in testis. Expressed at lower level in heart, brain, spleen, lung, liver, skeletal muscle, kidney, bone marrow, eye, lymph node, smooth muscle, prostate, thymus, stomach and uterus.

The protein resides in the mitochondrion inner membrane. The catalysed reaction is a 1,2-diacyl-sn-glycero-3-phospho-(1'-sn-glycero-3'-phosphate) + H2O = a 1,2-diacyl-sn-glycero-3-phospho-(1'-sn-glycerol) + phosphate. It catalyses the reaction O-phospho-L-tyrosyl-[protein] + H2O = L-tyrosyl-[protein] + phosphate. The enzyme catalyses O-phospho-L-seryl-[protein] + H2O = L-seryl-[protein] + phosphate. It carries out the reaction O-phospho-L-threonyl-[protein] + H2O = L-threonyl-[protein] + phosphate. The catalysed reaction is 1,2-di-(9Z-octadecenoyl)-sn-glycero-3-phospho-(1'-sn-glycerol-3'-phosphate) + H2O = 1,2-di-(9Z-octadecenoyl)-sn-glycero-3-phospho-(1'-sn-glycerol) + phosphate. It catalyses the reaction 1,2-dioctanoyl-sn-glycero-3-phospho-(1D-myo-inositol-5-phosphate) + H2O = 1,2-dioctanoyl-sn-glycero-3-phospho-(1D-myo-inositol) + phosphate. The enzyme catalyses a 1-acyl-2-hexanoyl-sn-glycero-3-phospho-(1D-myo-inositol-5-phosphate) + H2O = a 1-acyl-2-hexanoyl-sn-glycero-3-phospho-(1D-myo-inositol) + phosphate. It carries out the reaction 1,2-dibutyryl-sn-glycero-3-phospho-(1D-myo-inositol-5-phosphate) + H2O = 1,2-dibutyryl-sn-glycero-3-phospho-(1D-myo-inositol) + phosphate. The protein operates within phospholipid metabolism; phosphatidylglycerol biosynthesis; phosphatidylglycerol from CDP-diacylglycerol: step 2/2. In terms of biological role, lipid phosphatase which dephosphorylates phosphatidylglycerophosphate (PGP) to phosphatidylglycerol (PG). PGP is an essential intermediate in the biosynthetic pathway of cardiolipin, a mitochondrial-specific phospholipid regulating the membrane integrity and activities of the organelle. Has also been shown to display phosphatase activity toward phosphoprotein substrates, specifically mediates dephosphorylation of mitochondrial proteins, thereby playing an essential role in ATP production. Has probably a preference for proteins phosphorylated on Ser and/or Thr residues compared to proteins phosphorylated on Tyr residues. Probably involved in regulation of insulin secretion in pancreatic beta cells. May prevent intrinsic apoptosis, probably by regulating mitochondrial membrane integrity. The polypeptide is Phosphatidylglycerophosphatase and protein-tyrosine phosphatase 1 (Mus musculus (Mouse)).